The chain runs to 23 residues: Basic phospholipase A2 CB2 (23 aa).

Ca(2+) is required as a cofactor. Contains 7 disulfide bonds. In terms of tissue distribution, expressed by the venom gland.

Its subcellular location is the secreted. It catalyses the reaction a 1,2-diacyl-sn-glycero-3-phosphocholine + H2O = a 1-acyl-sn-glycero-3-phosphocholine + a fatty acid + H(+). Snake venom phospholipase A2 (PLA2) that shows presynaptic neurotoxicity. PLA2 catalyzes the calcium-dependent hydrolysis of the 2-acyl groups in 3-sn-phosphoglycerides. The protein is Basic phospholipase A2 CB2 of Crotalus durissus cumanensis (South American rattlesnake).